The sequence spans 192 residues: Interleukin-18 (192 aa).

Positions 1-35 are excised as a propeptide; the sequence is MAAEPEDNCISFVEMKFINNTLYFVAENDEDLESD.

This sequence belongs to the IL-1 family. As to quaternary structure, forms a ternary complex with ligand-binding receptor subunit IL18R1 and signaling receptor subunit IL18RAP at the plasma membrane. Mature IL18 first binds to IL18R1 forming a low affinity binary complex, which then interacts with IL18RAP to form a high affinity ternary complex that signals inside the cell. Interacts with cargo receptor TMED10; the interaction mediates the translocation from the cytoplasm into the ERGIC (endoplasmic reticulum-Golgi intermediate compartment) and thereby secretion. In terms of processing, the pro-IL-18 precursor is processed by CASP1, CASP4 or CASP5 to yield its mature, active form. The pro-IL-18 precursor features autoinhibitory interactions between the propeptide and the post-cleavage-site region, preventing recognition by the IL18R1 receptor. Processing by CASP1, CASP4 or CASP5 induces conformational changes to generate critical receptor-binding sites. The mature form is then secreted and released in the extracellular milieu by passing through the gasdermin-D (GSDMD) pore. In contrast, cleavage by CASP3 inactivates IL18.

Its subcellular location is the cytoplasm. It is found in the cytosol. The protein resides in the secreted. In terms of biological role, pro-inflammatory cytokine primarily involved in epithelial barrier repair, polarized T-helper 1 (Th1) cell and natural killer (NK) cell immune responses. Upon binding to IL18R1 and IL18RAP, forms a signaling ternary complex which activates NF-kappa-B, triggering synthesis of inflammatory mediators. Synergizes with IL12/interleukin-12 to induce IFNG synthesis from T-helper 1 (Th1) cells and natural killer (NK) cells. Involved in transduction of inflammation downstream of pyroptosis: its mature form is specifically released in the extracellular milieu by passing through the gasdermin-D (GSDMD) pore. The polypeptide is Interleukin-18 (IL18) (Sus scrofa (Pig)).